Here is a 402-residue protein sequence, read N- to C-terminus: tRNA pseudouridine synthase Pus10 (402 aa).

The THUMP domain occupies 37–159; sequence RLRGERLVEK…QIRVHVQINP (123 aa). Aspartate 228 (nucleophile) is an active-site residue. Substrate-binding residues include tyrosine 296 and tyrosine 364.

Belongs to the pseudouridine synthase Pus10 family.

It catalyses the reaction uridine(54) in tRNA = pseudouridine(54) in tRNA. The catalysed reaction is uridine(55) in tRNA = pseudouridine(55) in tRNA. Responsible for synthesis of pseudouridine from uracil-54 and uracil-55 in the psi GC loop of transfer RNAs. The protein is tRNA pseudouridine synthase Pus10 of Methanothermobacter marburgensis (strain ATCC BAA-927 / DSM 2133 / JCM 14651 / NBRC 100331 / OCM 82 / Marburg) (Methanobacterium thermoautotrophicum).